Here is a 64-residue protein sequence, read N- to C-terminus: Large ribosomal subunit protein eL37 (64 aa).

Residues C20, C23, C35, and C38 each contribute to the Zn(2+) site. The segment at 20-38 adopts a C4-type zinc-finger fold; that stretch reads CRRCGRRSFHVRKKVCAAC.

The protein belongs to the eukaryotic ribosomal protein eL37 family. It depends on Zn(2+) as a cofactor.

In terms of biological role, binds to the 23S rRNA. This chain is Large ribosomal subunit protein eL37, found in Methanococcus maripaludis (strain C5 / ATCC BAA-1333).